The following is a 1368-amino-acid chain: DNA-directed RNA polymerase subunit beta (1368 aa).

Belongs to the RNA polymerase beta chain family. The RNAP catalytic core consists of 2 alpha, 1 beta, 1 beta' and 1 omega subunit. When a sigma factor is associated with the core the holoenzyme is formed, which can initiate transcription.

It catalyses the reaction RNA(n) + a ribonucleoside 5'-triphosphate = RNA(n+1) + diphosphate. DNA-dependent RNA polymerase catalyzes the transcription of DNA into RNA using the four ribonucleoside triphosphates as substrates. The chain is DNA-directed RNA polymerase subunit beta from Burkholderia cenocepacia (strain HI2424).